The primary structure comprises 681 residues: Peroxisomal acyl-coenzyme A oxidase 2 (681 aa).

The disordered stretch occupies residues 1–28; that stretch reads MGNPGDRVSLGETWSREVHPDIDSERHS. Phosphoserine is present on serine 9. Position 13 is a phosphothreonine (threonine 13). Positions 14-28 are enriched in basic and acidic residues; it reads WSREVHPDIDSERHS. 6 positions are modified to N6-succinyllysine: lysine 66, lysine 137, lysine 303, lysine 453, lysine 561, and lysine 667. The short motif at 679-681 is the Microbody targeting signal element; sequence PKL.

This sequence belongs to the acyl-CoA oxidase family. As to quaternary structure, homodimer. It depends on FAD as a cofactor. Acetylation of Lys-667 is observed in liver mitochondria from fasted mice but not from fed mice.

The protein localises to the peroxisome. The enzyme catalyses (25R)-3alpha,7alpha,12alpha-trihydroxy-5beta-cholestan-26-oyl-CoA + A + H2O = (24R,25R)-3alpha,7alpha,12alpha,24-tetrahydroxy-5beta-cholestan-26-oyl-CoA + AH2. The catalysed reaction is (25S)-3alpha,7alpha,12alpha-trihydroxy-5beta-cholestan-26-oyl-CoA + O2 = (24E)-3alpha,7alpha,12alpha-trihydroxy-5beta-cholest-24-en-26-oyl-CoA + H2O2. Oxidizes the CoA esters of the bile acid intermediates di- and tri-hydroxycoprostanic acids. Capable of oxidizing short as well as long chain 2-methyl branched fatty acids. In Mus musculus (Mouse), this protein is Peroxisomal acyl-coenzyme A oxidase 2.